Here is a 1508-residue protein sequence, read N- to C-terminus: uncharacterized protein (1508 aa).

A coiled-coil region spans residues 149 to 267 (ARRQQWRLRR…ARSLQEHRAT (119 aa)). Disordered stretches follow at residues 248–268 (ERSE…RATE), 345–403 (SQDW…LAGS), 536–575 (FLKK…GKNL), 725–754 (GLEE…SQEH), and 868–916 (EAKS…AEPW). Residues 868 to 881 (EAKSKESGEGDKPG) are compositionally biased toward basic and acidic residues. Residues 972–1034 (ISRLERDNHR…KGNLGQLQKA (63 aa)) adopt a coiled-coil conformation. Disordered regions lie at residues 1158–1186 (LAAG…LVWR) and 1204–1246 (KEAH…EEDP). Polar residues predominate over residues 1163 to 1172 (TGPSTGTGNS). The span at 1204–1215 (KEAHLEKEEKRP) shows a compositional bias: basic and acidic residues. Polar residues predominate over residues 1220–1230 (AQGQALSSLSN). Residues 1271 to 1302 (HQASLDEATRLQEELQAKLEELQKKQHEAKLA) are a coiled coil.

This is an uncharacterized protein from Homo sapiens (Human).